Reading from the N-terminus, the 1204-residue chain is Cingulin (1204 aa).

Positions 7–357 are head; sequence MAEPRGPVDH…GVISSGSSKA (351 aa). The segment at 25–48 is disordered; the sequence is EPVSGAEMGTLRRGGRRPAKDARA. The ZIM motif lies at 48 to 62; the sequence is ASTYGVAVRVQGIAG. The interval 54–67 is interaction with TJP1/ZO1; sequence AVRVQGIAGQPFVV. Disordered regions lie at residues 68–174 and 186–266; these read LNSG…DTAP and DGQL…FSRA. Residues 93-119 show a composition bias toward polar residues; sequence ALSSDSELPENPYSQVQGFPAPSQSST. Phosphoserine is present on residues Ser95, Ser96, Ser98, Ser135, Ser137, Ser140, Ser155, Ser165, Ser214, and Ser217. Over residues 207–231 the composition is skewed to basic and acidic residues; it reads EQRKRSKSLDSRLPRDTLEERERQS. Polar residues predominate over residues 232–245; that stretch reads TNHWNPSTKYNNHV. Residues 247 to 261 show a composition bias toward low complexity; it reads SLKQPAQSPSPSPLS. A phosphoserine mark is found at Ser258, Ser276, Ser338, and Ser351. The stretch at 358 to 1161 forms a coiled coil; it reads MAGQGELARK…SLEKDSWRKA (804 aa). The segment at 379 to 398 is disordered; sequence VKKRQKLEPSRAGLERQLEE. N6-acetyllysine is present on Lys579. Residues 1161-1182 are disordered; it reads ASRSAAESALKHEGLSSDEEFD. The segment at 1162–1204 is tail; the sequence is SRSAAESALKHEGLSSDEEFDSVYDPSSIASLLTESNLQTSSC. A phosphoserine mark is found at Ser1176, Ser1177, and Ser1183.

It belongs to the cingulin family. In terms of assembly, homodimer. Interacts with TJP1/ZO1 and SPEF1.

It is found in the cell junction. Its subcellular location is the tight junction. Its function is as follows. Probably plays a role in the formation and regulation of the tight junction (TJ) paracellular permeability barrier. The protein is Cingulin of Plecturocebus moloch (Dusky titi monkey).